Here is a 147-residue protein sequence, read N- to C-terminus: MKVLLIKDVKNLGKAGEVKEVKDGYGKNFLIARGFAKLATPDVIEAWKKEQAKKAQEEAAEIEKLKQLKEKIESTKLVIKHKAGANGALFGAITNKEVAEELKKQGIEIDKKHIDIHPPIKQAGEYEIDVKLGHGIHAKLNLVVEAE.

The protein belongs to the bacterial ribosomal protein bL9 family.

In terms of biological role, binds to the 23S rRNA. The chain is Large ribosomal subunit protein bL9 from Nitratiruptor sp. (strain SB155-2).